The chain runs to 296 residues: MLRVLPRALRLPCSWRFSGARDCASHATTRTPEIQVQALTGPNQGITEILMNRPNARNALGNVFVSELLEALAQLREDQQVRVLLFRSAVKGVFCAGADLKEREQMSDVEVGTFVQRLRGLMSEIAAFPVPTIAAMDGFALGGGLELALACDLRIAASSAVMGLIETTRGLLPGAGGTQRLPRCLGVALAKELIFTGRRLNGAQARELGLVNHAVAQNEEGNAAYHRALALAQEILPQAPIAVRLGKVAIDRGMEVDIASGMAIEQMCYAQNIPTQDRLEGMAAFREKRAPKFVGK.

The N-terminal 17 residues, methionine 1–phenylalanine 17, are a transit peptide targeting the mitochondrion. Lysine 101 carries the post-translational modification N6-acetyllysine; alternate. An N6-succinyllysine; alternate modification is found at lysine 101.

The protein belongs to the enoyl-CoA hydratase/isomerase family.

The protein localises to the mitochondrion. This is Enoyl-CoA hydratase domain-containing protein 2, mitochondrial (Echdc2) from Mus musculus (Mouse).